Reading from the N-terminus, the 411-residue chain is 3-phosphoshikimate 1-carboxyvinyltransferase (411 aa).

3-phosphoshikimate-binding residues include K20, S21, and R25. Residue K20 coordinates phosphoenolpyruvate. Residues G86 and R114 each coordinate phosphoenolpyruvate. 3-phosphoshikimate contacts are provided by S156, S157, Q158, S181, D295, and K322. Q158 lines the phosphoenolpyruvate pocket. The active-site Proton acceptor is D295. Phosphoenolpyruvate-binding residues include R326, R367, and K393.

This sequence belongs to the EPSP synthase family. In terms of assembly, monomer.

The protein resides in the cytoplasm. The catalysed reaction is 3-phosphoshikimate + phosphoenolpyruvate = 5-O-(1-carboxyvinyl)-3-phosphoshikimate + phosphate. It functions in the pathway metabolic intermediate biosynthesis; chorismate biosynthesis. Its function is as follows. Catalyzes the transfer of the enolpyruvyl moiety of phosphoenolpyruvate (PEP) to the 5-hydroxyl of shikimate-3-phosphate (S3P) to produce enolpyruvyl shikimate-3-phosphate and inorganic phosphate. This is 3-phosphoshikimate 1-carboxyvinyltransferase from Picrophilus torridus (strain ATCC 700027 / DSM 9790 / JCM 10055 / NBRC 100828 / KAW 2/3).